Reading from the N-terminus, the 211-residue chain is Claudin-7 (211 aa).

The Cytoplasmic segment spans residues 1 to 7; sequence MANSGLQ. A helical membrane pass occupies residues 8–28; the sequence is LLGFSMALLGWVGLVACTAIP. The Extracellular portion of the chain corresponds to 29–81; the sequence is QWQMSSYAGDNIITAQAMYKGLWMDCVTQSTGMMSCKMYDSVLALSAALQATR. Residues 82 to 102 form a helical membrane-spanning segment; that stretch reads ALMVVSLVLGFLAMFVATMGM. The Cytoplasmic portion of the chain corresponds to 103–117; it reads KCTRCGGDDKVKKAR. A helical transmembrane segment spans residues 118–138; it reads IAMGGGIIFIVAGLAALVACS. Over 139–160 the chain is Extracellular; sequence WYGHQIVTDFYNPLIPTNIKYE. Residues 161–181 form a helical membrane-spanning segment; that stretch reads FGPAIFIGWAGSALVILGGAL. The Cytoplasmic segment spans residues 182-211; sequence LSCSCPGNESKAGYRVPRSYPKSNSSKEYV. The interval 210–211 is interactions with TJP1, TJP2 and TJP3; the sequence is YV.

Belongs to the claudin family. In terms of assembly, directly interacts with TJP1/ZO-1, TJP2/ZO-2 and TJP3/ZO-3. The phosphorylated form interacts with EPCAM. Does not interact with CD81. In terms of processing, phosphorylated. In terms of tissue distribution, expressed in kidney, lung and prostate. Isoform 1 seems to be predominant, except in some normal prostate samples, where isoform 2 is the major form. Down-regulated in breast cancers, including ductal carcinoma in situ (DCIS), lobular carcinoma in situ (LCIS) and invasive ductal carcinoma (IDC) (at protein level), as well as in several cancer cell lines. Loss of expression correlates with histological grade, occurring predominantly in high-grade lesions.

It localises to the cell membrane. The protein resides in the basolateral cell membrane. It is found in the cell junction. The protein localises to the tight junction. Functionally, plays a major role in tight junction-specific obliteration of the intercellular space. This Homo sapiens (Human) protein is Claudin-7 (CLDN7).